We begin with the raw amino-acid sequence, 129 residues long: Phosphoribosyl-AMP cyclohydrolase (129 aa).

Aspartate 85 contacts Mg(2+). Residue cysteine 86 coordinates Zn(2+). Residues aspartate 87 and aspartate 89 each contribute to the Mg(2+) site. The Zn(2+) site is built by cysteine 102 and cysteine 109.

Belongs to the PRA-CH family. In terms of assembly, homodimer. Mg(2+) is required as a cofactor. The cofactor is Zn(2+).

Its subcellular location is the cytoplasm. It catalyses the reaction 1-(5-phospho-beta-D-ribosyl)-5'-AMP + H2O = 1-(5-phospho-beta-D-ribosyl)-5-[(5-phospho-beta-D-ribosylamino)methylideneamino]imidazole-4-carboxamide. Its pathway is amino-acid biosynthesis; L-histidine biosynthesis; L-histidine from 5-phospho-alpha-D-ribose 1-diphosphate: step 3/9. Functionally, catalyzes the hydrolysis of the adenine ring of phosphoribosyl-AMP. The sequence is that of Phosphoribosyl-AMP cyclohydrolase (hisI) from Methanococcus maripaludis (strain DSM 14266 / JCM 13030 / NBRC 101832 / S2 / LL).